The primary structure comprises 535 residues: Dual specificity calcium/calmodulin-dependent 3',5'-cyclic nucleotide phosphodiesterase 1A (535 aa).

2 calmodulin-binding regions span residues 24–44 (TEKM…QLER) and 114–137 (EKPK…MYRK). Residues 142–522 (VGLAYPAAVI…ERWKELAAQE (381 aa)) enclose the PDEase domain. The active-site Proton donor is H219. Zn(2+) is bound by residues H223, H259, D260, and D366. D260 contacts Mg(2+).

The protein belongs to the cyclic nucleotide phosphodiesterase family. PDE1 subfamily. As to quaternary structure, homodimer. Interacts with YWHAZ. Zn(2+) serves as cofactor. It depends on Mg(2+) as a cofactor. As to expression, several tissues, including brain, kidney, testes and heart.

The catalysed reaction is a nucleoside 3',5'-cyclic phosphate + H2O = a nucleoside 5'-phosphate + H(+). It catalyses the reaction 3',5'-cyclic GMP + H2O = GMP + H(+). The enzyme catalyses 3',5'-cyclic AMP + H2O = AMP + H(+). Its activity is regulated as follows. Type I PDE are activated by the binding of calmodulin in the presence of Ca(2+). Functionally, calcium/calmodulin-dependent cyclic nucleotide phosphodiesterase with a dual specificity for the second messengers cGMP and cAMP, which are key regulators of many important physiological processes. Has a higher efficiency with cGMP compared to cAMP. The protein is Dual specificity calcium/calmodulin-dependent 3',5'-cyclic nucleotide phosphodiesterase 1A of Homo sapiens (Human).